The primary structure comprises 574 residues: Arginine--tRNA ligase (574 aa).

Positions 121-131 (PNIAKEMHIGH) match the 'HIGH' region motif.

The protein belongs to the class-I aminoacyl-tRNA synthetase family. Monomer.

The protein resides in the cytoplasm. The enzyme catalyses tRNA(Arg) + L-arginine + ATP = L-arginyl-tRNA(Arg) + AMP + diphosphate. The polypeptide is Arginine--tRNA ligase (Buchnera aphidicola subsp. Acyrthosiphon pisum (strain 5A)).